We begin with the raw amino-acid sequence, 200 residues long: 3-isopropylmalate dehydratase small subunit (200 aa).

The protein belongs to the LeuD family. LeuD type 1 subfamily. As to quaternary structure, heterodimer of LeuC and LeuD.

It catalyses the reaction (2R,3S)-3-isopropylmalate = (2S)-2-isopropylmalate. Its pathway is amino-acid biosynthesis; L-leucine biosynthesis; L-leucine from 3-methyl-2-oxobutanoate: step 2/4. Catalyzes the isomerization between 2-isopropylmalate and 3-isopropylmalate, via the formation of 2-isopropylmaleate. The polypeptide is 3-isopropylmalate dehydratase small subunit (Vibrio vulnificus (strain YJ016)).